A 244-amino-acid chain; its full sequence is Extracellular superoxide dismutase [Cu-Zn] (244 aa).

The signal sequence occupies residues 1–15; it reads MVAFLFCNLLLVACG. Cystine bridges form between Cys70–Cys215 and Cys132–Cys214. N-linked (GlcNAc...) asparagine glycosylation occurs at Asn114. Residues His121, His123, and His138 each contribute to the Cu cation site. Zn(2+) is bound by residues His138, His146, His149, and Asp152. His188 serves as a coordination point for Cu cation. The segment at 224–244 is disordered; that stretch reads AWESQTKERKKRRRESECKTT.

It belongs to the Cu-Zn superoxide dismutase family. In terms of assembly, homodimer. Interacts with ATP7A; this interaction is copper-dependent and is required for SOD3 activity. Requires Cu cation as cofactor. It depends on Zn(2+) as a cofactor.

It localises to the secreted. The protein resides in the extracellular space. The protein localises to the golgi apparatus. Its subcellular location is the trans-Golgi network. It carries out the reaction 2 superoxide + 2 H(+) = H2O2 + O2. In terms of biological role, protect the extracellular space from toxic effect of reactive oxygen intermediates by converting superoxide radicals into hydrogen peroxide and oxygen. The chain is Extracellular superoxide dismutase [Cu-Zn] (Sod3) from Rattus norvegicus (Rat).